The sequence spans 298 residues: N-acetylmuramic acid 6-phosphate etherase (298 aa).

The region spanning 55 to 218 (IHAQVSGGGR…STGLMIKSGK (164 aa)) is the SIS domain. Glu-83 (proton donor) is an active-site residue. Residue Glu-114 is part of the active site.

This sequence belongs to the GCKR-like family. MurNAc-6-P etherase subfamily. In terms of assembly, homodimer.

It catalyses the reaction N-acetyl-D-muramate 6-phosphate + H2O = N-acetyl-D-glucosamine 6-phosphate + (R)-lactate. It functions in the pathway amino-sugar metabolism; N-acetylmuramate degradation. It participates in amino-sugar metabolism; 1,6-anhydro-N-acetylmuramate degradation. The protein operates within cell wall biogenesis; peptidoglycan recycling. Its function is as follows. Specifically catalyzes the cleavage of the D-lactyl ether substituent of MurNAc 6-phosphate, producing GlcNAc 6-phosphate and D-lactate. Together with AnmK, is also required for the utilization of anhydro-N-acetylmuramic acid (anhMurNAc) either imported from the medium or derived from its own cell wall murein, and thus plays a role in cell wall recycling. This is N-acetylmuramic acid 6-phosphate etherase from Escherichia coli (strain K12 / MC4100 / BW2952).